A 209-amino-acid polypeptide reads, in one-letter code: Glycolipid transfer protein A (209 aa).

A run of 2 repeats spans residues 45–55 and 56–66. The 2 X 12 AA approximate tandem repeats stretch occupies residues 45-66; sequence IKADITGNITKIRSVYESNPTK. 48–55 lines the beta-D-galactosyl-(1-&gt;4)-beta-D-glucosyl-(1&lt;-&gt;1)-N-[(9Z)-octadecenoyl]-sphing-4-enine pocket; the sequence is DITGNITK. The beta-D-galactosyl-(1-&gt;4)-beta-D-glucosyl-(1&lt;-&gt;1)-N-[(9Z)-octadecenoyl]-sphing-4-enine site is built by histidine 140 and tyrosine 207.

It belongs to the GLTP family.

It is found in the cytoplasm. Its function is as follows. Accelerates the intermembrane transfer of various glycolipids. Catalyzes the transfer of various glycosphingolipids between membranes but does not catalyze the transfer of phospholipids. May be involved in the intracellular translocation of glucosylceramides. The chain is Glycolipid transfer protein A (gltp-a) from Xenopus laevis (African clawed frog).